A 254-amino-acid chain; its full sequence is MSKPWLFTVHGTGQPDPLGPGLPADTARDVLDIYRWQPIGNYPAAAFPMWPSVEKGVAELILQIELKLDADPYADFAMAGYSQGAIVVGQVLKHHILPPTGRLHRFLHRLKKVIFWGNPMRQKGFAHSDEWIHPVAAPDTLGILEDRLENLEQYGFEVRDYAHDGDMYASIKEDDLHEYEVAIGRIVMKASGFIGGRDSVVAQLIELGQRPITEGIALAGAIIDALTFFARSRMGDKWPHLYNRYPAVEFLRQI.

Catalysis depends on residues Ser82, Asp166, and His240.

It belongs to the L5likevirus endolysin B protein family.

Its function is as follows. Endolysin that degrades the junction between mycolic acid and peptidoglycans in the host cell wall and participates with the holin protein in the sequential events which lead to the programmed host cell lysis releasing the mature viral particles. Once the holin has permeabilized the host cell membrane, the endolysin can reach the periplasm and break down the mycolic acid-rich outer membrane. Cleaves the ester linkage joining the mycolic acid-rich outer membrane to arabinogalactan, releasing free mycolic acids. In Mycobacterium phage D29 (Mycobacteriophage D29), this protein is Endolysin B (12).